The primary structure comprises 157 residues: SsrA-binding protein (157 aa).

It belongs to the SmpB family.

The protein localises to the cytoplasm. Its function is as follows. Required for rescue of stalled ribosomes mediated by trans-translation. Binds to transfer-messenger RNA (tmRNA), required for stable association of tmRNA with ribosomes. tmRNA and SmpB together mimic tRNA shape, replacing the anticodon stem-loop with SmpB. tmRNA is encoded by the ssrA gene; the 2 termini fold to resemble tRNA(Ala) and it encodes a 'tag peptide', a short internal open reading frame. During trans-translation Ala-aminoacylated tmRNA acts like a tRNA, entering the A-site of stalled ribosomes, displacing the stalled mRNA. The ribosome then switches to translate the ORF on the tmRNA; the nascent peptide is terminated with the 'tag peptide' encoded by the tmRNA and targeted for degradation. The ribosome is freed to recommence translation, which seems to be the essential function of trans-translation. The protein is SsrA-binding protein of Chromohalobacter salexigens (strain ATCC BAA-138 / DSM 3043 / CIP 106854 / NCIMB 13768 / 1H11).